Here is a 278-residue protein sequence, read N- to C-terminus: NAD kinase (278 aa).

The active-site Proton acceptor is aspartate 56. Residues 56–57 (DG), 132–133 (NE), arginine 158, aspartate 160, and 171–176 (TAYNKS) each bind NAD(+).

Belongs to the NAD kinase family. A divalent metal cation is required as a cofactor.

Its subcellular location is the cytoplasm. The enzyme catalyses NAD(+) + ATP = ADP + NADP(+) + H(+). Functionally, involved in the regulation of the intracellular balance of NAD and NADP, and is a key enzyme in the biosynthesis of NADP. Catalyzes specifically the phosphorylation on 2'-hydroxyl of the adenosine moiety of NAD to yield NADP. The sequence is that of NAD kinase from Streptococcus pyogenes serotype M1.